We begin with the raw amino-acid sequence, 656 residues long: Chaperone protein DnaK (656 aa).

Disordered stretches follow at residues 488 to 532 and 579 to 656; these read EMQE…DAVD and YQQQ…DEDE. Residues 492-513 are compositionally biased toward basic and acidic residues; it reads EAEKHAEEDEKRRERIEARNEA. Residues 523-532 are compositionally biased toward acidic residues; that stretch reads LLDENEDAVD. Residues 584-635 show a composition bias toward gly residues; that stretch reads GEGGAGAGAGAAGGMGGAGPGGMGGAGPGGMGGAGPGGMGGAGPGAGAGQQG. The segment covering 636–656 has biased composition (acidic residues); the sequence is DGEEFVDADFEDVDDEDDEDE.

Belongs to the heat shock protein 70 family.

Functionally, acts as a chaperone. This is Chaperone protein DnaK from Natronomonas pharaonis (strain ATCC 35678 / DSM 2160 / CIP 103997 / JCM 8858 / NBRC 14720 / NCIMB 2260 / Gabara) (Halobacterium pharaonis).